A 660-amino-acid chain; its full sequence is T-box protein H15 (660 aa).

Residues Met-1–Lys-11 are compositionally biased toward polar residues. 3 disordered regions span residues Met-1–Gln-72, Gly-90–Asp-122, and Gln-169–Val-266. Residues Pro-12–Gln-22 are compositionally biased toward low complexity. Residues Asn-23–Val-33 are compositionally biased toward polar residues. Residues Ala-35–Ser-47 are compositionally biased toward low complexity. A compositionally biased stretch (basic residues) spans Ser-48–Asn-71. Composition is skewed to low complexity over residues Ala-93–Ser-108 and Gln-169–Gln-179. The segment covering Gln-180–His-198 has biased composition (basic residues). Positions Ser-199–Thr-233 are enriched in low complexity. Over residues Pro-234 to Gln-243 the composition is skewed to pro residues. Positions Leu-286–Asp-472 form a DNA-binding region, T-box. Positions Asn-598–Pro-660 are disordered. The span at Thr-600–Ala-613 shows a compositional bias: pro residues. Residues Thr-614–Pro-624 are compositionally biased toward low complexity. Over residues Gln-643–Pro-660 the composition is skewed to polar residues.

It is found in the nucleus. In Drosophila melanogaster (Fruit fly), this protein is T-box protein H15 (H15).